We begin with the raw amino-acid sequence, 243 residues long: Pleckstrin homology domain-containing family B member 1 (243 aa).

Residues 21–128 (ALVRGGWLWR…WKTALMEANS (108 aa)) enclose the PH domain.

Binds transducins. Homodimer. Interacts (via PH domain) with MYO1C. Interacts (via PH domain) with MYO7A. As to expression, highly expressed in retina and brain. In retina, abundantly expressed in photoreceptors. Isoform 4 is the predominant isoform expressed in mature olfactory receptor neurons and vestibular and cochlear hair cells. Also expressed in cells with possible sensory function, including peripheral retinal ganglion cells, cochlear interdental cells, and neurons of the circumventricular organ (at protein level).

It is found in the membrane. The protein localises to the cytoplasm. In Mus musculus (Mouse), this protein is Pleckstrin homology domain-containing family B member 1 (Plekhb1).